A 246-amino-acid chain; its full sequence is MRVGIIGCSGRMGTLLSSLLRSSNRFTLGPGFSRQSPYSLDSVIESNDVLVDFSSSSFSEELLIALLSNPKPLIFATTKPEPSYSVDEKLQRLAAYVPVVVCPNTSLGAYVQKRLVGLLARVFDDRYDIRISEVHHREKKDPVSGTAKELASILCHTKQEAWQQEYSIGSRCHSVKNIELHVSRVGNISGEHEVAFISDKEHISIHHKVFSRAVFAEGALRILDWLIDESPPPGCYGPEVGLKVSM.

7-12 (GCSGRM) provides a ligand contact to NAD(+). Arginine 34 serves as a coordination point for NADP(+). Residues 76-78 (ATT) and 102-105 (CPNT) each bind NAD(+). Histidine 135 serves as the catalytic Proton donor/acceptor. Residue histidine 136 participates in (S)-2,3,4,5-tetrahydrodipicolinate binding. The Proton donor role is filled by lysine 139. 145 to 146 (GT) contributes to the (S)-2,3,4,5-tetrahydrodipicolinate binding site.

It belongs to the DapB family.

It is found in the cytoplasm. It carries out the reaction (S)-2,3,4,5-tetrahydrodipicolinate + NAD(+) + H2O = (2S,4S)-4-hydroxy-2,3,4,5-tetrahydrodipicolinate + NADH + H(+). It catalyses the reaction (S)-2,3,4,5-tetrahydrodipicolinate + NADP(+) + H2O = (2S,4S)-4-hydroxy-2,3,4,5-tetrahydrodipicolinate + NADPH + H(+). It functions in the pathway amino-acid biosynthesis; L-lysine biosynthesis via DAP pathway; (S)-tetrahydrodipicolinate from L-aspartate: step 4/4. Catalyzes the conversion of 4-hydroxy-tetrahydrodipicolinate (HTPA) to tetrahydrodipicolinate. The sequence is that of 4-hydroxy-tetrahydrodipicolinate reductase from Chlamydia abortus (strain DSM 27085 / S26/3) (Chlamydophila abortus).